The following is a 151-amino-acid chain: UPF0756 membrane protein Aflv_0503 (151 aa).

Transmembrane regions (helical) follow at residues Phe-4–Ile-24, Leu-52–Phe-72, Trp-85–Leu-105, and Leu-115–Ile-135.

Belongs to the UPF0756 family.

It is found in the cell membrane. The polypeptide is UPF0756 membrane protein Aflv_0503 (Anoxybacillus flavithermus (strain DSM 21510 / WK1)).